The following is a 294-amino-acid chain: MKKLTMESLLVYTFVMGVCFTSNLTCEQKIVLIQEQKLGAICISTCYVNGVLAGNSSCVSVRTSYLINLAMLTDGFKAMKVGNITSISEKTAFLRVIINYYFRGVMLRALIAKRLPNAAQLSSTVNCWLEGHSAGGVMTLFYGTERIVLKSSTEMNASQWTSDGPDANGTLNILNERVSLDSYFLSMICPQLSDEIYKKKVVHSKYFSLIKNDTMPKKFLRNTWKSAWTNWYKYKEIEALLDFSRDYENVSEITHSMSAAGLFFLAGGAFTMLLLLCCLSMITRKHVVKDLGYK.

The signal sequence occupies residues 1 to 21 (MKKLTMESLLVYTFVMGVCFT). The chain crosses the membrane as a helical span at residues 262-282 (LFFLAGGAFTMLLLLCCLSMI).

This sequence belongs to the herpesviridae immediate early glycoprotein family.

Its subcellular location is the host membrane. The protein is Putative immediate early glycoprotein (U18) of Homo sapiens (Human).